Reading from the N-terminus, the 477-residue chain is PTS system glucose-specific EIICB component (477 aa).

The 388-residue stretch at 1 to 388 (MFKNVFSSLQ…FNLKTPGREE (388 aa)) folds into the PTS EIIC type-1 domain. 9 consecutive transmembrane segments (helical) span residues 20–40 (VSVLPIAGILLGIGSAHFTLI), 51–71 (TGGSIFSNMPLIFAIGVALGF), 76–96 (GVAALAAVVAYSILIQTLSAV), 112–132 (NFSDIGILGGIIAGAISAYMF), 152–172 (FVPIISGLFAIFVGLILSLIW), 250–270 (LSGGFIFKMYGLPGAALAIWH), 280–300 (IGSIMISAALTAFLTGITEPI), 304–324 (FILVAPILYIIHAILAGLSFP), and 354–374 (IFLFPIVGICYGLLYYSIFYF). Residues 399-477 (IEIAPYIVEA…TAIDEYINNI (79 aa)) form the PTS EIIB type-1 domain. Cys421 (phosphocysteine intermediate; for EIIB activity) is an active-site residue. Cys421 carries the post-translational modification Phosphocysteine.

It is found in the cell inner membrane. It catalyses the reaction N(pros)-phospho-L-histidyl-[protein] + D-glucose(out) = D-glucose 6-phosphate(in) + L-histidyl-[protein]. In terms of biological role, the phosphoenolpyruvate-dependent sugar phosphotransferase system (sugar PTS), a major carbohydrate active transport system, catalyzes the phosphorylation of incoming sugar substrates concomitantly with their translocation across the cell membrane. The enzyme II complex composed of PtsG and Crr is involved in glucose transport. The chain is PTS system glucose-specific EIICB component (ptsG) from Buchnera aphidicola subsp. Schizaphis graminum (strain Sg).